The chain runs to 91 residues: uncharacterized protein (91 aa).

An N-terminal signal peptide occupies residues 1–21; it reads MKQLLASPSLQLVTYPASATA.

Belongs to the BhsA/McbA family.

It is found in the periplasm. This is an uncharacterized protein from Escherichia coli O157:H7.